Consider the following 219-residue polypeptide: Putative zinc metalloprotease YwhC (219 aa).

A helical transmembrane segment spans residues 4–24 (FLYYPLSLMPYLVITLIVSFT). H26 serves as a coordination point for Zn(2+). Residue E27 is part of the active site. Residue H30 participates in Zn(2+) binding. 4 helical membrane-spanning segments follow: residues 52–72 (PIKHLDPFGTILILVAGFGWA), 94–114 (IAGPVSNLILAFIGFFLLVLM), 132–152 (FFSIWIQLNLVLFLFNLLPLP), and 180–200 (FIVFLVLFVTPLGSYVLWPML).

Belongs to the peptidase M50B family. Zn(2+) is required as a cofactor.

It is found in the cell membrane. The polypeptide is Putative zinc metalloprotease YwhC (ywhC) (Bacillus subtilis (strain 168)).